Reading from the N-terminus, the 663-residue chain is UvrABC system protein B (663 aa).

In terms of domain architecture, Helicase ATP-binding spans 27-414 (KNIENGVKDQ…SDNHIAEQLI (388 aa)). Residue 40-47 (GVTGSGKT) participates in ATP binding. A Beta-hairpin motif is present at residues 93-116 (YYDYYQPEAYIKTTDTYIEKDSSV). Residues 432 to 594 (QVDDLLDEIR…IDPKSIIKEI (163 aa)) form the Helicase C-terminal domain. Residues 624–659 (EKEITKLEKKIKKLVEELDFEQAIILRDEMLKLKEL) form the UVR domain.

Belongs to the UvrB family. Forms a heterotetramer with UvrA during the search for lesions. Interacts with UvrC in an incision complex.

It localises to the cytoplasm. Functionally, the UvrABC repair system catalyzes the recognition and processing of DNA lesions. A damage recognition complex composed of 2 UvrA and 2 UvrB subunits scans DNA for abnormalities. Upon binding of the UvrA(2)B(2) complex to a putative damaged site, the DNA wraps around one UvrB monomer. DNA wrap is dependent on ATP binding by UvrB and probably causes local melting of the DNA helix, facilitating insertion of UvrB beta-hairpin between the DNA strands. Then UvrB probes one DNA strand for the presence of a lesion. If a lesion is found the UvrA subunits dissociate and the UvrB-DNA preincision complex is formed. This complex is subsequently bound by UvrC and the second UvrB is released. If no lesion is found, the DNA wraps around the other UvrB subunit that will check the other stand for damage. The polypeptide is UvrABC system protein B (Fusobacterium nucleatum subsp. nucleatum (strain ATCC 25586 / DSM 15643 / BCRC 10681 / CIP 101130 / JCM 8532 / KCTC 2640 / LMG 13131 / VPI 4355)).